The primary structure comprises 214 residues: Pyrrolidone-carboxylate peptidase (214 aa).

Catalysis depends on residues Glu-80, Cys-143, and His-166.

The protein belongs to the peptidase C15 family. Homotetramer.

Its subcellular location is the cytoplasm. The catalysed reaction is Release of an N-terminal pyroglutamyl group from a polypeptide, the second amino acid generally not being Pro.. Its function is as follows. Removes 5-oxoproline from various penultimate amino acid residues except L-proline. The protein is Pyrrolidone-carboxylate peptidase of Escherichia fergusonii (strain ATCC 35469 / DSM 13698 / CCUG 18766 / IAM 14443 / JCM 21226 / LMG 7866 / NBRC 102419 / NCTC 12128 / CDC 0568-73).